Reading from the N-terminus, the 378-residue chain is Probable 3-hydroxyisobutyryl-CoA hydrolase 2 (378 aa).

The substrate site is built by G115, E138, and D146. The Microbody targeting signal motif lies at 376 to 378 (AKL).

This sequence belongs to the enoyl-CoA hydratase/isomerase family.

The protein resides in the peroxisome. The catalysed reaction is 3-hydroxy-2-methylpropanoyl-CoA + H2O = 3-hydroxy-2-methylpropanoate + CoA + H(+). It functions in the pathway amino-acid degradation; L-valine degradation. In terms of biological role, involved in valine catabolism. In Arabidopsis thaliana (Mouse-ear cress), this protein is Probable 3-hydroxyisobutyryl-CoA hydrolase 2.